A 130-amino-acid chain; its full sequence is Small ribosomal subunit protein uS8 (130 aa).

N6-succinyllysine is present on K88.

This sequence belongs to the universal ribosomal protein uS8 family. In terms of assembly, component of the 40S ribosomal subunit. Part of the small subunit (SSU) processome, composed of more than 70 proteins and the RNA chaperone small nucleolar RNA (snoRNA) U3.

It localises to the cytoplasm. Its subcellular location is the nucleus. The protein resides in the nucleolus. In terms of biological role, component of the small ribosomal subunit. Part of the small subunit (SSU) processome, first precursor of the small eukaryotic ribosomal subunit. During the assembly of the SSU processome in the nucleolus, many ribosome biogenesis factors, an RNA chaperone and ribosomal proteins associate with the nascent pre-rRNA and work in concert to generate RNA folding, modifications, rearrangements and cleavage as well as targeted degradation of pre-ribosomal RNA by the RNA exosome. Required for proper erythropoiesis. The sequence is that of Small ribosomal subunit protein uS8 (RPS15A) from Pongo abelii (Sumatran orangutan).